The sequence spans 122 residues: Large ribosomal subunit protein uL14 (122 aa).

Belongs to the universal ribosomal protein uL14 family. In terms of assembly, part of the 50S ribosomal subunit. Forms a cluster with proteins L3 and L19. In the 70S ribosome, L14 and L19 interact and together make contacts with the 16S rRNA in bridges B5 and B8.

Functionally, binds to 23S rRNA. Forms part of two intersubunit bridges in the 70S ribosome. This is Large ribosomal subunit protein uL14 from Mycoplasma capricolum subsp. capricolum (strain California kid / ATCC 27343 / NCTC 10154).